Reading from the N-terminus, the 45-residue chain is Metallothionein-like protein 1C (45 aa).

The protein belongs to the metallothionein superfamily. Type 15 family. In terms of tissue distribution, widely expressed at low levels.

Metallothioneins have a high content of cysteine residues that bind various heavy metals. Confers tolerance to cadmium (Cd) and plays a role in Cd and zinc (Zn) homeostasis. The sequence is that of Metallothionein-like protein 1C (MT1C) from Arabidopsis thaliana (Mouse-ear cress).